Reading from the N-terminus, the 322-residue chain is Cytochrome c biogenesis protein CcsA (322 aa).

The next 7 membrane-spanning stretches (helical) occupy residues 2–22 (LFAT…SIVI), 44–64 (GMIA…LSSG), 68–88 (LSNL…LHTI), 143–163 (MLLS…ILII), 226–246 (VISL…VWAN), 260–274 (TWAF…IYLH), and 289–309 (VASI…LLGI).

Belongs to the CcmF/CycK/Ccl1/NrfE/CcsA family. In terms of assembly, may interact with Ccs1.

It is found in the plastid. The protein localises to the chloroplast thylakoid membrane. Functionally, required during biogenesis of c-type cytochromes (cytochrome c6 and cytochrome f) at the step of heme attachment. This is Cytochrome c biogenesis protein CcsA from Brachypodium distachyon (Purple false brome).